We begin with the raw amino-acid sequence, 1007 residues long: Serine/threonine-protein kinase PRP4 homolog (1007 aa).

Over residues 1-10 (MAAAETQSLR) the composition is skewed to polar residues. Residues 1 to 99 (MAAAETQSLR…EGMSPAKRTK (99 aa)) form a disordered region. Residue Ala-2 is modified to N-acetylalanine. A phosphoserine mark is found at Ser-8, Ser-20, Ser-23, and Ser-32. Composition is skewed to basic residues over residues 39–59 (KHSRHKKKKHKHRSKHKKHKH) and 67–81 (KKHKHKHKHKKHKRK). The segment covering 82-91 (EVIDASDKEG) has biased composition (basic and acidic residues). 2 positions are modified to phosphoserine: Ser-87 and Ser-93. Residue Lys-99 is modified to N6-acetyllysine; alternate. Residue Lys-99 forms a Glycyl lysine isopeptide (Lys-Gly) (interchain with G-Cter in SUMO2); alternate linkage. A Glycyl lysine isopeptide (Lys-Gly) (interchain with G-Cter in SUMO2) cross-link involves residue Lys-111. Lys-117 participates in a covalent cross-link: Glycyl lysine isopeptide (Lys-Gly) (interchain with G-Cter in SUMO2); alternate. Lys-117 is covalently cross-linked (Glycyl lysine isopeptide (Lys-Gly) (interchain with G-Cter in SUMO1); alternate). Position 131 is a phosphoserine (Ser-131). At Tyr-140 the chain carries Phosphotyrosine. 2 disordered regions span residues 140–533 (YESG…EEED) and 559–583 (SNMSVPSEPSSPQSSTRTRSPSPDD). A phosphoserine mark is found at Ser-142, Ser-144, and Ser-166. Residues 157 to 168 (GNRSSTRSSSTK) are compositionally biased toward low complexity. Residues Lys-170 and Lys-177 each participate in a glycyl lysine isopeptide (Lys-Gly) (interchain with G-Cter in SUMO2) cross-link. 2 stretches are compositionally biased toward basic residues: residues 179-202 (TTKKRSKSRSKERTRHRSDKKKSK) and 214-230 (RSKSKERKKSKSPSKRS). A phosphoserine mark is found at Ser-239, Ser-241, Ser-257, Ser-277, Ser-283, Ser-292, and Ser-294. A compositionally biased stretch (basic and acidic residues) spans 247-270 (RSQEKIGKARSPTDDKVKIEDKSK). Positions 302–315 (SKDRRSRSKERKSK) are enriched in basic residues. Basic and acidic residues predominate over residues 316–325 (RSETDKEKKP). Phosphoserine occurs at positions 328, 354, 356, 366, and 368. A compositionally biased stretch (basic residues) spans 342–367 (PSRRPGRSPKRRSLSPKPRDKSRRSR). A Phosphothreonine modification is found at Thr-385. The residue at position 387 (Ser-387) is a Phosphoserine. Composition is skewed to basic and acidic residues over residues 395-408 (RSLERKRREPERRR) and 415-429 (RPRDDILSRRERSKD). 3 positions are modified to phosphoserine: Ser-427, Ser-431, and Ser-437. Residues 438–497 (PTRRRSRSPIRRRSRSPLRRSRSPRRRSRSPRRRDRGRRSRSRLRRRSRSRGGRRRRSRS) are compositionally biased toward basic residues. A phosphoserine mark is found at Ser-518, Ser-519, Ser-520, Ser-565, Ser-569, Ser-578, and Ser-580. Residues 518–533 (SSSDDNLEDFDVEEED) are compositionally biased toward acidic residues. Residues 562 to 581 (SVPSEPSSPQSSTRTRSPSP) are compositionally biased toward low complexity. Glycyl lysine isopeptide (Lys-Gly) (interchain with G-Cter in SUMO2) cross-links involve residues Lys-593 and Lys-659. Residues 687 to 1003 (YNVYGYTGQG…INQALQHAFI (317 aa)) form the Protein kinase domain. Residues 693–701 (TGQGVFSNV) and Lys-717 contribute to the ATP site. Lys-717 is modified (N6-acetyllysine). Asp-815 acts as the Proton acceptor in catalysis. Residue Tyr-849 is modified to Phosphotyrosine. Ser-852 bears the Phosphoserine mark.

It belongs to the protein kinase superfamily. CMGC Ser/Thr protein kinase family. In terms of assembly, interacts with CLK1 C-terminus. Associates with the U5 snRNP and NCOR1 deacetylase complexes. Identified in the spliceosome C complex. Phosphorylated by CLK1. Autophosphorylated; phosphorylation inhibits interaction with its targets, such as PRPF6 or SMARCA4.

Its subcellular location is the nucleus. It localises to the chromosome. The protein resides in the centromere. The protein localises to the kinetochore. It carries out the reaction L-seryl-[protein] + ATP = O-phospho-L-seryl-[protein] + ADP + H(+). It catalyses the reaction L-threonyl-[protein] + ATP = O-phospho-L-threonyl-[protein] + ADP + H(+). Its function is as follows. Serine/threonine kinase involved in spliceosomal assembly as well as mitosis and signaling regulation. Connects chromatin mediated regulation of transcription and pre-mRNA splicing. During spliceosomal assembly, interacts with and phosphorylates PRPF6 and PRPF31, components of the U4/U6-U5 tri-small nuclear ribonucleoprotein (snRNP), to facilitate the formation of the spliceosome B complex. Plays a role in regulating transcription and the spindle assembly checkpoint (SAC). Associates with U5 snRNP and NCOR1 deacetylase complexes which may allow a coordination of pre-mRNA splicing with chromatin remodeling events involved in transcriptional regulation. Associates and probably phosphorylates SMARCA4 and NCOR1. Phosphorylates SRSF1. Associates with kinetochores during mitosis and is necessary for recruitment and maintenance of the checkpoint proteins such as MAD1L1 and MAD12L1 at the kinetochores. Phosphorylates and regulates the activity of the transcription factors such as ELK1 and KLF13. Phosphorylates nuclear YAP1 and WWTR1/TAZ which induces nuclear exclusion and regulates Hippo signaling pathway, involved in tissue growth control. The sequence is that of Serine/threonine-protein kinase PRP4 homolog (PRP4K) from Pongo abelii (Sumatran orangutan).